A 1496-amino-acid chain; its full sequence is Chromosome partition protein MukB (1496 aa).

Position 63-70 (63-70 (GGNGAGKS)) interacts with ATP. Coiled coils occupy residues 328 to 493 (KLEL…QRLS) and 536 to 632 (KMQA…APAW). Positions 694 to 811 (PDGSDDVRLN…EVPLFGRAAR (118 aa)) are flexible hinge. Coiled-coil stretches lie at residues 861 to 1171 (NPEE…SAEE) and 1235 to 1291 (IDAI…LQNI). Residues 1082 to 1091 (RARSRRDELQ) are compositionally biased toward basic and acidic residues. A disordered region spans residues 1082–1101 (RARSRRDELQQRLSQQRSRK).

It belongs to the SMC family. MukB subfamily. Homodimerization via its hinge domain. Binds to DNA via its C-terminal region. Interacts, and probably forms a ternary complex, with MukE and MukF via its C-terminal region. The complex formation is stimulated by calcium or magnesium. Interacts with tubulin-related protein FtsZ.

Its subcellular location is the cytoplasm. The protein localises to the nucleoid. In terms of biological role, plays a central role in chromosome condensation, segregation and cell cycle progression. Functions as a homodimer, which is essential for chromosome partition. Involved in negative DNA supercoiling in vivo, and by this means organize and compact chromosomes. May achieve or facilitate chromosome segregation by condensation DNA from both sides of a centrally located replisome during cell division. The polypeptide is Chromosome partition protein MukB (Actinobacillus pleuropneumoniae serotype 3 (strain JL03)).